Here is a 321-residue protein sequence, read N- to C-terminus: Ribosomal RNA small subunit methyltransferase H (321 aa).

Residues 34 to 36, D54, F80, D102, and Q109 contribute to the S-adenosyl-L-methionine site; that span reads GGH.

This sequence belongs to the methyltransferase superfamily. RsmH family.

The protein localises to the cytoplasm. The enzyme catalyses cytidine(1402) in 16S rRNA + S-adenosyl-L-methionine = N(4)-methylcytidine(1402) in 16S rRNA + S-adenosyl-L-homocysteine + H(+). Its function is as follows. Specifically methylates the N4 position of cytidine in position 1402 (C1402) of 16S rRNA. This Blochmanniella floridana protein is Ribosomal RNA small subunit methyltransferase H.